The sequence spans 611 residues: L-tyrosine decarboxylase (611 aa).

Pyridoxal 5'-phosphate is bound by residues 151–152, threonine 292, and 382–384; these read GS and DPH. The residue at position 385 (lysine 385) is an N6-(pyridoxal phosphate)lysine. The Proton donor role is filled by tyrosine 413. Position 433 (serine 433) interacts with pyridoxal 5'-phosphate.

It belongs to the group II decarboxylase family. Tyrosine decarboxylase subfamily. As to quaternary structure, homodimer. The cofactor is pyridoxal 5'-phosphate.

It carries out the reaction L-tyrosine + H(+) = tyramine + CO2. It catalyses the reaction L-dopa + H(+) = dopamine + CO2. It functions in the pathway amino-acid metabolism. Its activity is regulated as follows. Levodopa decarboxylation is not inhibited by carbidopa, benserazide, and methyldopa, that are three human L-dopa decarboxylase inhibitors. Catalyzes the decarboxylation of L-tyrosine to produce tyramine. Plays a role in acid resistance since tyramine production via tyrosine decarboxylation appears to provide a cytosolic pH maintenance mechanism that helps the bacterium cope with acid stress such as that encountered in gastrointestinal tract (GIT) environments. Therefore, may contribute to the colonization of the human GIT by E.faecium. Functionally, also involved in drug metabolism, being able to catalyze decarboxylation of levodopa (L-dopa) to dopamine. In gut microbiota this enzyme is in fact exclusively responsible for the decarboxylation of levodopa, and thus reduces in situ levels of levodopa in the treatment of Parkinson's disease. It was shown that abundance of bacterial tyrosine decarboxylase in the proximal small intestine - the primary site of levodopa absorption - contributes to interindividual variation in drug efficacy and can explain the requirement for an increased dosage regimen of levodopa treatment in Parkinson's disease patients. The protein is L-tyrosine decarboxylase of Enterococcus faecium (Streptococcus faecium).